Consider the following 341-residue polypeptide: Very-long-chain 3-oxoacyl-CoA reductase (341 aa).

Residues 22–42 (AVTGFLLVGIASFAAPLISTI) traverse the membrane as a helical segment. Positions 67, 123, 131, 150, 217, 221, 250, and 252 each coordinate NADP(+). Tyr217 functions as the Proton donor in the catalytic mechanism. The active-site Lowers pKa of active site Tyr is the Lys221.

The protein belongs to the short-chain dehydrogenases/reductases (SDR) family.

Its subcellular location is the endoplasmic reticulum membrane. The catalysed reaction is a very-long-chain (3R)-3-hydroxyacyl-CoA + NADP(+) = a very-long-chain 3-oxoacyl-CoA + NADPH + H(+). The protein operates within lipid metabolism; fatty acid biosynthesis. Component of the microsomal membrane bound fatty acid elongation system, which produces the 26-carbon very long-chain fatty acids (VLCFA) from palmitate. Catalyzes the reduction of the 3-ketoacyl-CoA intermediate that is formed in each cycle of fatty acid elongation. VLCFAs serve as precursors for ceramide and sphingolipids. This chain is Very-long-chain 3-oxoacyl-CoA reductase, found in Pyrenophora tritici-repentis (strain Pt-1C-BFP) (Wheat tan spot fungus).